A 116-amino-acid polypeptide reads, in one-letter code: Protein V2 (116 aa).

Belongs to the geminiviridae protein AV2/V2 family. Interacts with host SGS3.

It is found in the host cytoplasm. The protein resides in the host perinuclear region. Functionally, through its interaction with host SGS3, acts as a suppressor of RNA-mediated gene silencing, also known as post-transcriptional gene silencing (PTGS), a mechanism of plant viral defense that limits the accumulation of viral RNAs. This Tomato yellow leaf curl virus (strain Israel) (TYLCV) protein is Protein V2.